Consider the following 165-residue polypeptide: Protein-export protein SecB (165 aa).

Belongs to the SecB family. Homotetramer, a dimer of dimers. One homotetramer interacts with 1 SecA dimer.

It localises to the cytoplasm. In terms of biological role, one of the proteins required for the normal export of preproteins out of the cell cytoplasm. It is a molecular chaperone that binds to a subset of precursor proteins, maintaining them in a translocation-competent state. It also specifically binds to its receptor SecA. This Marinobacter nauticus (strain ATCC 700491 / DSM 11845 / VT8) (Marinobacter aquaeolei) protein is Protein-export protein SecB.